Here is a 485-residue protein sequence, read N- to C-terminus: E-selectin (485 aa).

Positions 1–22 are cleaved as a signal peptide; it reads MIVSQYLSALTFVLLLFKESRT. Residues 23–140 form the C-type lectin domain; it reads WSYHASTEMM…CTKQKLALCY (118 aa). Topologically, residues 23 to 430 are extracellular; it reads WSYHASTEMM…CEAPTVSQTP (408 aa). Cystine bridges form between C41–C139, C112–C131, C144–C155, C149–C164, C166–C175, C181–C224, C194–C206, C210–C237, C242–C286, C255–C268, C272–C299, C304–C349, C335–C362, C367–C408, and C394–C421. Residues N61, N79, and N88 are each glycosylated (N-linked (GlcNAc...) asparagine). Positions 102, 104, and 110 each coordinate Ca(2+). A carbohydrate-binding positions include 102–110, 114–119, and 127–129; these read EPNNKQSDE, EIYIKR, and NDE. Residues N127 and D128 each contribute to the Ca(2+) site. Residues 141–176 enclose the EGF-like domain; that stretch reads KAACNPTPCGSHGECVETINNYTCQCHPGFKGLKCE. Residue N161 is glycosylated (N-linked (GlcNAc...) asparagine). Sushi domains are found at residues 179–239, 240–301, 302–364, and 365–423; these read VTCP…KCNV, VKCD…TCKA, VSCA…VCEV, and VRCS…TCEA. N203 carries an N-linked (GlcNAc...) asparagine glycan. Residue N265 is glycosylated (N-linked (GlcNAc...) asparagine). 2 N-linked (GlcNAc...) asparagine glycosylation sites follow: N312 and N316. Residues N379 and N401 are each glycosylated (N-linked (GlcNAc...) asparagine). Residues 431-453 traverse the membrane as a helical segment; that stretch reads LAVGLSTAGVSLVTIPSFLFWLL. Residues 454–485 lie on the Cytoplasmic side of the membrane; the sequence is KRLQKKAKKFSPASSCSSLKSNGCYSTPSKLI. The segment at 466 to 485 is disordered; sequence ASSCSSLKSNGCYSTPSKLI.

It belongs to the selectin/LECAM family. Interacts with SELPLG/PSGL1 and PODXL2 through the sialyl Lewis X epitope. SELPLG sulfation appears not to be required for this interaction.

The protein localises to the cell membrane. Functionally, cell-surface glycoprotein having a role in immunoadhesion. Mediates in the adhesion of blood neutrophils in cytokine-activated endothelium through interaction with SELPLG/PSGL1. May have a role in capillary morphogenesis. The sequence is that of E-selectin (SELE) from Bos taurus (Bovine).